The following is a 588-amino-acid chain: 2-isopropylmalate synthase (588 aa).

A Pyruvate carboxyltransferase domain is found at Pro-40–Asp-314. Positions 49, 253, 255, and 289 each coordinate Mg(2+). Residues Ala-456–Val-588 form a regulatory domain region.

It belongs to the alpha-IPM synthase/homocitrate synthase family. LeuA type 2 subfamily. As to quaternary structure, homodimer. It depends on Mg(2+) as a cofactor.

The protein resides in the cytoplasm. The enzyme catalyses 3-methyl-2-oxobutanoate + acetyl-CoA + H2O = (2S)-2-isopropylmalate + CoA + H(+). It participates in amino-acid biosynthesis; L-leucine biosynthesis; L-leucine from 3-methyl-2-oxobutanoate: step 1/4. In terms of biological role, catalyzes the condensation of the acetyl group of acetyl-CoA with 3-methyl-2-oxobutanoate (2-ketoisovalerate) to form 3-carboxy-3-hydroxy-4-methylpentanoate (2-isopropylmalate). The protein is 2-isopropylmalate synthase of Clavibacter michiganensis subsp. michiganensis (strain NCPPB 382).